Here is a 488-residue protein sequence, read N- to C-terminus: 3-octaprenyl-4-hydroxybenzoate carboxy-lyase (488 aa).

Asparagine 172 is a binding site for Mn(2+). Prenylated FMN contacts are provided by residues 175–177, 189–191, and 194–195; these read IYR, RWL, and RG. Position 238 (glutamate 238) interacts with Mn(2+). Aspartate 287 acts as the Proton donor in catalysis.

This sequence belongs to the UbiD family. Homohexamer. Prenylated FMN is required as a cofactor. It depends on Mn(2+) as a cofactor.

Its subcellular location is the cell membrane. It catalyses the reaction a 4-hydroxy-3-(all-trans-polyprenyl)benzoate + H(+) = a 2-(all-trans-polyprenyl)phenol + CO2. The protein operates within cofactor biosynthesis; ubiquinone biosynthesis. Catalyzes the decarboxylation of 3-octaprenyl-4-hydroxy benzoate to 2-octaprenylphenol, an intermediate step in ubiquinone biosynthesis. This is 3-octaprenyl-4-hydroxybenzoate carboxy-lyase from Pseudomonas fluorescens (strain SBW25).